Here is a 467-residue protein sequence, read N- to C-terminus: Retinoic acid receptor RXR-gamma (467 aa).

The segment at 1 to 142 (MYGNYPHFIK…TSPGSLAKHI (142 aa)) is modulating. 2 consecutive NR C4-type zinc fingers follow at residues 143–163 (CAIC…CEGC) and 179–203 (CRDN…YQKC). Residues 143 to 208 (CAICGDRSSG…RYQKCLAMGM (66 aa)) constitute a DNA-binding region (nuclear receptor). Residues 209 to 232 (KREAVQEERQGSRERSENEAESTS) are hinge. The span at 214–226 (QEERQGSRERSEN) shows a compositional bias: basic and acidic residues. The tract at residues 214–237 (QEERQGSRERSENEAESTSGGSED) is disordered. The 229-residue stretch at 235–463 (SEDMPVERIL…TFLMEMLETP (229 aa)) folds into the NR LBD domain.

It belongs to the nuclear hormone receptor family. NR2 subfamily. Homodimer. Heterodimer; with a RAR molecule. Binds DNA preferentially as a RAR/RXR heterodimer. In terms of tissue distribution, isoform 1 is highly expressed inliver. Isoform 2 is abundantly expressed in eye and dorsal root ganglia.

It localises to the nucleus. In terms of biological role, receptor for retinoic acid. Retinoic acid receptors bind as heterodimers to their target response elements in response to their ligands, all-trans or 9-cis retinoic acid, and regulate gene expression in various biological processes. The RAR/RXR heterodimers bind to the retinoic acid response elements (RARE) composed of tandem 5'-AGGTCA-3' sites known as DR1-DR5. The high affinity ligand for RXRs is 9-cis retinoic acid. The chain is Retinoic acid receptor RXR-gamma (RXRG) from Gallus gallus (Chicken).